We begin with the raw amino-acid sequence, 277 residues long: Protein G1-like2 (277 aa).

The span at 1–16 (MQGGGGGDSSGGGGGE) shows a compositional bias: gly residues. Disordered regions lie at residues 1-28 (MQGG…SQKR), 141-203 (RGIA…GHFF), and 225-245 (HQVS…TNTG). Residues 19 to 28 (RPSRYESQKR) are compositionally biased toward basic and acidic residues. Residues 22-149 (RYESQKRRDW…ARGIAYEKKR (128 aa)) form the ALOG domain. The Nuclear localization signal signature appears at 147 to 151 (KKRRK). Over residues 154-177 (PTSSSSSQAAAAAAAATSPASPAA) the composition is skewed to low complexity. A compositionally biased stretch (pro residues) spans 178–187 (SPTPPPPPPT).

This sequence belongs to the plant homeotic and developmental regulators ALOG protein family.

Its subcellular location is the nucleus. Probable transcription regulator that acts as a developmental regulator by promoting cell growth in response to light. This Oryza sativa subsp. japonica (Rice) protein is Protein G1-like2 (G1L2).